A 274-amino-acid polypeptide reads, in one-letter code: Bis(5'-nucleosyl)-tetraphosphatase, symmetrical (274 aa).

The protein belongs to the Ap4A hydrolase family.

The catalysed reaction is P(1),P(4)-bis(5'-adenosyl) tetraphosphate + H2O = 2 ADP + 2 H(+). Hydrolyzes diadenosine 5',5'''-P1,P4-tetraphosphate to yield ADP. The chain is Bis(5'-nucleosyl)-tetraphosphatase, symmetrical from Shewanella sediminis (strain HAW-EB3).